The chain runs to 138 residues: Small ribosomal subunit protein uS11 (138 aa).

Residues 1-12 show a composition bias toward polar residues; the sequence is MAKQSAKGSTTT. The disordered stretch occupies residues 1-37; it reads MAKQSAKGSTTTKRQRGKRREKKNVPRGQAHIQSTFN. Residues 13–22 show a composition bias toward basic residues; that stretch reads KRQRGKRREK.

Belongs to the universal ribosomal protein uS11 family. Part of the 30S ribosomal subunit. Interacts with proteins S7 and S18. Binds to IF-3.

Functionally, located on the platform of the 30S subunit, it bridges several disparate RNA helices of the 16S rRNA. Forms part of the Shine-Dalgarno cleft in the 70S ribosome. This chain is Small ribosomal subunit protein uS11, found in Roseiflexus castenholzii (strain DSM 13941 / HLO8).